Consider the following 341-residue polypeptide: S-adenosylmethionine:tRNA ribosyltransferase-isomerase (341 aa).

It belongs to the QueA family. As to quaternary structure, monomer.

The protein localises to the cytoplasm. The catalysed reaction is 7-aminomethyl-7-carbaguanosine(34) in tRNA + S-adenosyl-L-methionine = epoxyqueuosine(34) in tRNA + adenine + L-methionine + 2 H(+). It functions in the pathway tRNA modification; tRNA-queuosine biosynthesis. In terms of biological role, transfers and isomerizes the ribose moiety from AdoMet to the 7-aminomethyl group of 7-deazaguanine (preQ1-tRNA) to give epoxyqueuosine (oQ-tRNA). This Staphylococcus saprophyticus subsp. saprophyticus (strain ATCC 15305 / DSM 20229 / NCIMB 8711 / NCTC 7292 / S-41) protein is S-adenosylmethionine:tRNA ribosyltransferase-isomerase.